Reading from the N-terminus, the 282-residue chain is BTB/POZ domain-containing protein At3g56230 (282 aa).

Residues 40–50 (GSKEDRHDKSN) show a composition bias toward basic and acidic residues. A disordered region spans residues 40–66 (GSKEDRHDKSNHNSTINNGSSISSSPL). Residues 51-64 (HNSTINNGSSISSS) show a composition bias toward low complexity. Positions 111 to 181 (ADILLKPGDD…LYTGTLASDK (71 aa)) constitute a BTB domain.

It functions in the pathway protein modification; protein ubiquitination. May act as a substrate-specific adapter of an E3 ubiquitin-protein ligase complex (CUL3-RBX1-BTB) which mediates the ubiquitination and subsequent proteasomal degradation of target proteins. The sequence is that of BTB/POZ domain-containing protein At3g56230 from Arabidopsis thaliana (Mouse-ear cress).